Reading from the N-terminus, the 248-residue chain is Type III pantothenate kinase (248 aa).

Position 6–13 (6–13) interacts with ATP; that stretch reads DCGNSFIK. Substrate contacts are provided by residues tyrosine 92 and 99-102; that span reads GLDR. The active-site Proton acceptor is aspartate 101. Residue aspartate 121 participates in K(+) binding. An ATP-binding site is contributed by threonine 124. Threonine 180 serves as a coordination point for substrate.

It belongs to the type III pantothenate kinase family. Homodimer. NH4(+) serves as cofactor. The cofactor is K(+).

Its subcellular location is the cytoplasm. The catalysed reaction is (R)-pantothenate + ATP = (R)-4'-phosphopantothenate + ADP + H(+). It participates in cofactor biosynthesis; coenzyme A biosynthesis; CoA from (R)-pantothenate: step 1/5. Catalyzes the phosphorylation of pantothenate (Pan), the first step in CoA biosynthesis. The protein is Type III pantothenate kinase of Ectopseudomonas mendocina (strain ymp) (Pseudomonas mendocina).